A 75-amino-acid polypeptide reads, in one-letter code: Small ribosomal subunit protein bS18 (75 aa).

Belongs to the bacterial ribosomal protein bS18 family. Part of the 30S ribosomal subunit. Forms a tight heterodimer with protein bS6.

In terms of biological role, binds as a heterodimer with protein bS6 to the central domain of the 16S rRNA, where it helps stabilize the platform of the 30S subunit. This chain is Small ribosomal subunit protein bS18, found in Thermotoga sp. (strain RQ2).